The chain runs to 358 residues: tRNA pseudouridine synthase B (358 aa).

Residues 1 to 50 (MTTPDAAIDSKISDSNGADKNKSAADDNAFNAPGRKRHHNNQPRRDKRDV) are disordered. Asp-87 serves as the catalytic Nucleophile.

The protein belongs to the pseudouridine synthase TruB family. Type 1 subfamily.

It carries out the reaction uridine(55) in tRNA = pseudouridine(55) in tRNA. Functionally, responsible for synthesis of pseudouridine from uracil-55 in the psi GC loop of transfer RNAs. The protein is tRNA pseudouridine synthase B of Nitrobacter winogradskyi (strain ATCC 25391 / DSM 10237 / CIP 104748 / NCIMB 11846 / Nb-255).